The primary structure comprises 126 residues: Glycine cleavage system H protein (126 aa).

The Lipoyl-binding domain occupies 22–103 (KAYIGITDYA…PYGSWMALVE (82 aa)). At K63 the chain carries N6-lipoyllysine.

Belongs to the GcvH family. The glycine cleavage system is composed of four proteins: P, T, L and H. (R)-lipoate serves as cofactor.

In terms of biological role, the glycine cleavage system catalyzes the degradation of glycine. The H protein shuttles the methylamine group of glycine from the P protein to the T protein. The chain is Glycine cleavage system H protein from Thermoanaerobacter sp. (strain X514).